The sequence spans 157 residues: Glutathione peroxidase (157 aa).

C35 is a catalytic residue.

This sequence belongs to the glutathione peroxidase family.

It carries out the reaction 2 glutathione + H2O2 = glutathione disulfide + 2 H2O. The polypeptide is Glutathione peroxidase (gpo) (Lactococcus lactis subsp. cremoris (strain MG1363)).